A 327-amino-acid chain; its full sequence is uncharacterized protein (327 aa).

The region spanning 12–84 (MRIDRYLTQQ…IPITILYEDD (73 aa)) is the S4 RNA-binding domain. Asp137 is a catalytic residue.

It belongs to the pseudouridine synthase RluA family.

The enzyme catalyses a uridine in RNA = a pseudouridine in RNA. This is an uncharacterized protein from Chlorobaculum parvum (strain DSM 263 / NCIMB 8327) (Chlorobium vibrioforme subsp. thiosulfatophilum).